The primary structure comprises 361 residues: Phosphoserine aminotransferase (361 aa).

Arginine 43 serves as a coordination point for L-glutamate. Residues 77-78 (AS), tryptophan 103, threonine 153, aspartate 173, and glutamine 196 contribute to the pyridoxal 5'-phosphate site. Lysine 197 is subject to N6-(pyridoxal phosphate)lysine. Position 238 to 239 (238 to 239 (NT)) interacts with pyridoxal 5'-phosphate.

The protein belongs to the class-V pyridoxal-phosphate-dependent aminotransferase family. SerC subfamily. Homodimer. Pyridoxal 5'-phosphate serves as cofactor.

The protein resides in the cytoplasm. It catalyses the reaction O-phospho-L-serine + 2-oxoglutarate = 3-phosphooxypyruvate + L-glutamate. The enzyme catalyses 4-(phosphooxy)-L-threonine + 2-oxoglutarate = (R)-3-hydroxy-2-oxo-4-phosphooxybutanoate + L-glutamate. Its pathway is amino-acid biosynthesis; L-serine biosynthesis; L-serine from 3-phospho-D-glycerate: step 2/3. It participates in cofactor biosynthesis; pyridoxine 5'-phosphate biosynthesis; pyridoxine 5'-phosphate from D-erythrose 4-phosphate: step 3/5. Functionally, catalyzes the reversible conversion of 3-phosphohydroxypyruvate to phosphoserine and of 3-hydroxy-2-oxo-4-phosphonooxybutanoate to phosphohydroxythreonine. The protein is Phosphoserine aminotransferase of Pseudomonas aeruginosa (strain LESB58).